The sequence spans 129 residues: Succinate dehydrogenase subunit 3-2, mitochondrial (129 aa).

Residues 1 to 58 constitute a mitochondrion transit peptide; the sequence is MEKYQSKARFAPLSDAPFALRGALGSSNSSFNNIDHLRQSSSSGQARSYTSSPLGALR. A compositionally biased stretch (polar residues) spans 27-53; it reads SNSSFNNIDHLRQSSSSGQARSYTSSP. Positions 27–66 are disordered; it reads SNSSFNNIDHLRQSSSSGQARSYTSSPLGALRPKMFPSGN. Position 87 (His-87) interacts with heme. Residues 105–127 traverse the membrane as a helical segment; sequence IFGAALGAVIISIPLATKFSLMF.

In terms of assembly, component of complex II composed of eight subunits in plants: four classical SDH subunits SDH1, SDH2, SDH3 and SDH4 (a flavoprotein (FP), an iron-sulfur protein (IP), and a cytochrome b composed of a large and a small subunit.), as well as four subunits unknown in mitochondria from bacteria and heterotrophic eukaryotes. Heme serves as cofactor.

Its subcellular location is the mitochondrion inner membrane. The protein operates within carbohydrate metabolism; tricarboxylic acid cycle. Its function is as follows. Membrane-anchoring subunit of succinate dehydrogenase (SDH). The polypeptide is Succinate dehydrogenase subunit 3-2, mitochondrial (Oryza sativa subsp. japonica (Rice)).